Reading from the N-terminus, the 196-residue chain is 3-isopropylmalate dehydratase small subunit (196 aa).

The protein belongs to the LeuD family. LeuD type 1 subfamily. In terms of assembly, heterodimer of LeuC and LeuD.

It carries out the reaction (2R,3S)-3-isopropylmalate = (2S)-2-isopropylmalate. The protein operates within amino-acid biosynthesis; L-leucine biosynthesis; L-leucine from 3-methyl-2-oxobutanoate: step 2/4. Its function is as follows. Catalyzes the isomerization between 2-isopropylmalate and 3-isopropylmalate, via the formation of 2-isopropylmaleate. This chain is 3-isopropylmalate dehydratase small subunit, found in Corynebacterium efficiens (strain DSM 44549 / YS-314 / AJ 12310 / JCM 11189 / NBRC 100395).